Consider the following 179-residue polypeptide: Large ribosomal subunit protein uL5 (179 aa).

It belongs to the universal ribosomal protein uL5 family. As to quaternary structure, part of the 50S ribosomal subunit; part of the 5S rRNA/L5/L18/L25 subcomplex. Contacts the 5S rRNA and the P site tRNA. Forms a bridge to the 30S subunit in the 70S ribosome.

This is one of the proteins that bind and probably mediate the attachment of the 5S RNA into the large ribosomal subunit, where it forms part of the central protuberance. In the 70S ribosome it contacts protein S13 of the 30S subunit (bridge B1b), connecting the 2 subunits; this bridge is implicated in subunit movement. Contacts the P site tRNA; the 5S rRNA and some of its associated proteins might help stabilize positioning of ribosome-bound tRNAs. This Pseudomonas syringae pv. tomato (strain ATCC BAA-871 / DC3000) protein is Large ribosomal subunit protein uL5.